A 143-amino-acid polypeptide reads, in one-letter code: MTKTFSAKPADVTHEWFVIDATDKVLGRVASEVALRLRGKHKAIYTPHVDTGDFIVIINAAQLRVTGAKPIDKVYYRHSGYPGGITATNFRDMQAKHPGRALEKAVKGMLPKGPLGYAMIKKLKVYGGAEHPHTAQQPKVLEL.

This sequence belongs to the universal ribosomal protein uL13 family. Part of the 50S ribosomal subunit.

Its function is as follows. This protein is one of the early assembly proteins of the 50S ribosomal subunit, although it is not seen to bind rRNA by itself. It is important during the early stages of 50S assembly. The sequence is that of Large ribosomal subunit protein uL13 from Variovorax paradoxus (strain S110).